The primary structure comprises 853 residues: Histone-lysine N-methyltransferase PRDM9 (853 aa).

In terms of domain architecture, SET spans 83-197; that stretch reads QGLVIGRSSI…PGQEFRVWYA (115 aa). Substrate-binding positions include 127-133 and Tyr-196; that span reads DSANSWV. Residues 230 to 253 form a C2H2-type 1 zinc finger; that stretch reads CPCPFCHYSFPTLVYLHAHVKRTH. Cys-235 contributes to the Zn(2+) binding site. 275 to 277 contributes to the S-adenosyl-L-methionine binding site; that stretch reads TEV. Polar residues predominate over residues 291–314; that stretch reads QTQPVTESPQEQISTQNGQPIHQT. The tract at residues 291 to 322 is disordered; it reads QTQPVTESPQEQISTQNGQPIHQTENSDEPDA. C2H2-type zinc fingers lie at residues 337-360, 366-388, and 405-428; these read HACV…RTIH, YCCS…QHTH, and YPCT…KRHH. Position 341 to 342 (341 to 342) interacts with S-adenosyl-L-methionine; the sequence is DC. The Zn(2+) site is built by Cys-407, Cys-410, His-423, and His-428. The segment at 447–496 is disordered; that stretch reads EDHTEVCFDKQDPNYEPPSRGRKSTKNSLKGRGCPKKVAVGRPRGRPPKN. Over residues 450–459 the composition is skewed to basic and acidic residues; that stretch reads TEVCFDKQDP. The C2H2-type 5; degenerate zinc finger occupies 508–528; the sequence is PICTNCEQSFSDLETLKTHQC. The segment at 547–569 adopts a C2H2-type 6; degenerate zinc-finger fold; sequence YICGECIRAFSNLDLLKAHECIQ. C2H2-type zinc fingers lie at residues 575–598, 604–626, and 644–666; these read YCCP…RTIH, YCCT…QQSH, and FPCA…IRRH. Residues 689–711 form a C2H2-type 10; degenerate zinc finger; that stretch reads HSCSQCCKSFSTIKGFKNHSCFK. C2H2-type zinc fingers lie at residues 717–739, 745–767, 773–795, 801–823, and 829–852; these read YLCP…QRIH, YTCS…LRTH, FLCS…EQKH, CQCP…QQLH, and FPCT…QKMH. Cys-747, Cys-750, His-763, His-767, Cys-775, Cys-778, His-791, His-795, Cys-803, Cys-806, His-819, His-823, Cys-831, Cys-834, and His-847 together coordinate Zn(2+). The DNA-binding stretch occupies residues 755–845; it reads VHSGQLNVHL…KSFTRRYHLT (91 aa).

Belongs to the class V-like SAM-binding methyltransferase superfamily. In terms of assembly, homodimer. In terms of processing, mono-methylated; automethylated. Tri-methylated; automethylated.

It is found in the nucleus. Its subcellular location is the chromosome. The enzyme catalyses L-lysyl-[protein] + S-adenosyl-L-methionine = N(6)-methyl-L-lysyl-[protein] + S-adenosyl-L-homocysteine + H(+). It catalyses the reaction N(6)-methyl-L-lysyl-[protein] + S-adenosyl-L-methionine = N(6),N(6)-dimethyl-L-lysyl-[protein] + S-adenosyl-L-homocysteine + H(+). The catalysed reaction is L-lysyl(4)-[histone H3] + 3 S-adenosyl-L-methionine = N(6),N(6),N(6)-trimethyl-L-lysyl(4)-[histone H3] + 3 S-adenosyl-L-homocysteine + 3 H(+). It carries out the reaction L-lysyl(36)-[histone H3] + 3 S-adenosyl-L-methionine = N(6),N(6),N(6)-trimethyl-L-lysyl(36)-[histone H3] + 3 S-adenosyl-L-homocysteine + 3 H(+). The enzyme catalyses L-lysyl(9)-[histone H3] + 3 S-adenosyl-L-methionine = N(6),N(6),N(6)-trimethyl-L-lysyl(9)-[histone H3] + 3 S-adenosyl-L-homocysteine + 3 H(+). It catalyses the reaction L-lysyl(20)-[histone H4] + S-adenosyl-L-methionine = N(6)-methyl-L-lysyl(20)-[histone H4] + S-adenosyl-L-homocysteine + H(+). The catalysed reaction is N(6)-methyl-L-lysyl(20)-[histone H4] + S-adenosyl-L-methionine = N(6),N(6)-dimethyl-L-lysyl(20)-[histone H4] + S-adenosyl-L-homocysteine + H(+). In terms of biological role, histone methyltransferase that sequentially mono-, di-, and tri-methylates both 'Lys-4' (H3K4) and 'Lys-36' (H3K36) of histone H3 to produce respectively trimethylated 'Lys-4' (H3K4me3) and trimethylated 'Lys-36' (H3K36me3) histone H3 and plays a key role in meiotic prophase by determining hotspot localization thereby promoting meiotic recombination. Can also methylate all four core histones with H3 being the best substrate and the most highly modified. Is also able, on one hand, to mono and di-methylate H4K20 and on other hand to trimethylate H3K9 with the di-methylated H3K9 as the best substrate. During meiotic prophase, binds specific DNA sequences through its zinc finger domains thereby determining hotspot localization where it promotes local H3K4me3 and H3K36me3 enrichment on the same nucleosomes through its histone methyltransferase activity. Thereby promotes double-stranded breaks (DSB) formation, at this subset of PRDM9-binding sites, that initiates meiotic recombination for the proper meiotic progression. During meiotic progression hotspot-bound PRDM9 interacts with several complexes; in early leptonema binds CDYL and EHMT2 followed by EWSR1 and CXXC1 by the end of leptonema. EWSR1 joins PRDM9 with the chromosomal axis through REC8. In this way, controls the DSB repair pathway, pairing of homologous chromosomes and sex body formation. Moreover plays a central role in the transcriptional activation of genes during early meiotic prophase thanks to H3K4me3 and H3K36me3 enrichment that represents a specific tag for epigenetic transcriptional activation. In addition performs automethylation. Acetylation and phosphorylation of histone H3 attenuate or prevent histone H3 methylation. This is Histone-lysine N-methyltransferase PRDM9 (prdm9) from Danio rerio (Zebrafish).